The following is a 347-amino-acid chain: GMP reductase (347 aa).

108–131 (ADFQKTKDIMALTDDLIFICVDIA) lines the NADP(+) pocket. Gly181 and Gly183 together coordinate K(+). Catalysis depends on Cys186, which acts as the Thioimidate intermediate. 216-239 (IIGDGGCSCAGDVSKAFGGGADFV) contributes to the NADP(+) binding site.

This sequence belongs to the IMPDH/GMPR family. GuaC type 1 subfamily. In terms of assembly, homotetramer.

The catalysed reaction is IMP + NH4(+) + NADP(+) = GMP + NADPH + 2 H(+). Its function is as follows. Catalyzes the irreversible NADPH-dependent deamination of GMP to IMP. It functions in the conversion of nucleobase, nucleoside and nucleotide derivatives of G to A nucleotides, and in maintaining the intracellular balance of A and G nucleotides. The polypeptide is GMP reductase (Aliivibrio salmonicida (strain LFI1238) (Vibrio salmonicida (strain LFI1238))).